Reading from the N-terminus, the 707-residue chain is Polyribonucleotide nucleotidyltransferase (707 aa).

2 residues coordinate Mg(2+): aspartate 488 and aspartate 494. Residues 554 to 613 enclose the KH domain; that stretch reads PRLFTMKINQDKIREVIGKGGETIRSITAETGTEINIAEDGTITIAATTQEAGDAAKKRI. The 71-residue stretch at 623–693 folds into the S1 motif domain; the sequence is GKVYEGTVVK…DRGRVRLSIK (71 aa).

It belongs to the polyribonucleotide nucleotidyltransferase family. Mg(2+) serves as cofactor.

The protein localises to the cytoplasm. It carries out the reaction RNA(n+1) + phosphate = RNA(n) + a ribonucleoside 5'-diphosphate. Its function is as follows. Involved in mRNA degradation. Catalyzes the phosphorolysis of single-stranded polyribonucleotides processively in the 3'- to 5'-direction. The chain is Polyribonucleotide nucleotidyltransferase from Neisseria meningitidis serogroup B (strain ATCC BAA-335 / MC58).